Reading from the N-terminus, the 286-residue chain is Probable biotin transporter (286 aa).

EamA domains lie at 3–128 (YLLF…AIIR) and 139–277 (GFLL…LWVN). 10 consecutive transmembrane segments (helical) span residues 4-24 (LLFV…YLAG), 26-46 (VDSY…FLPL), 56-76 (FVGG…VCLY), 81-101 (VLTV…VALF), 109-129 (FNFW…IIRY), 136-156 (FLQG…GQVL), 174-194 (FGYF…LFGD), 203-223 (LQWG…QFWW), 234-254 (TLAV…LLIW), and 258-280 (ADLP…NRLG).

Belongs to the drug/metabolite transporter (DMT) superfamily. 10 TMS drug/metabolite exporter (DME) (TC 2.A.7.3) family.

It localises to the cell inner membrane. The enzyme catalyses biotin(in) = biotin(out). In terms of biological role, uptake of biotin. This is Probable biotin transporter from Pseudomonas aeruginosa (strain ATCC 15692 / DSM 22644 / CIP 104116 / JCM 14847 / LMG 12228 / 1C / PRS 101 / PAO1).